The primary structure comprises 356 residues: Photosystem II protein D1 (356 aa).

The next 3 helical transmembrane spans lie at 29-46, 118-133, and 142-156; these read YVGW…TATT, HFLI…QWEL, and WICV…AATA. Histidine 118 contributes to the chlorophyll a binding site. Tyrosine 126 lines the pheophytin a pocket. Residues aspartate 170 and glutamate 189 each contribute to the [CaMn4O5] cluster site. The chain crosses the membrane as a helical span at residues 197–218; that stretch reads FHMLGVAGVFGGSLFSAMHGSL. A chlorophyll a-binding site is contributed by histidine 198. A quinone is bound by residues histidine 215 and 264-265; that span reads SF. Residue histidine 215 coordinates Fe cation. Histidine 272 is a Fe cation binding site. A helical membrane pass occupies residues 274–288; the sequence is FLGAWPVIGIWFTAM. Residues histidine 332, glutamate 333, aspartate 342, and alanine 344 each coordinate [CaMn4O5] cluster. A propeptide spanning residues 345-356 is cleaved from the precursor; the sequence is SAEPVSAPVING.

The protein belongs to the reaction center PufL/M/PsbA/D family. In terms of assembly, PSII is composed of 1 copy each of membrane proteins PsbA, PsbB, PsbC, PsbD, PsbE, PsbF, PsbH, PsbI, PsbJ, PsbK, PsbL, PsbM, PsbT, PsbX, PsbY, PsbZ, Psb30/Ycf12, peripheral proteins PsbO, CyanoQ (PsbQ), PsbU, PsbV and a large number of cofactors. It forms dimeric complexes. Requires The D1/D2 heterodimer binds P680, chlorophylls that are the primary electron donor of PSII, and subsequent electron acceptors. It shares a non-heme iron and each subunit binds pheophytin, quinone, additional chlorophylls, carotenoids and lipids. D1 provides most of the ligands for the Mn4-Ca-O5 cluster of the oxygen-evolving complex (OEC). There is also a Cl(-1) ion associated with D1 and D2, which is required for oxygen evolution. The PSII complex binds additional chlorophylls, carotenoids and specific lipids. as cofactor. Post-translationally, tyr-161 forms a radical intermediate that is referred to as redox-active TyrZ, YZ or Y-Z. C-terminally processed by CtpA; processing is essential to allow assembly of the oxygen-evolving complex and thus photosynthetic growth.

Its subcellular location is the cellular thylakoid membrane. It catalyses the reaction 2 a plastoquinone + 4 hnu + 2 H2O = 2 a plastoquinol + O2. Functionally, photosystem II (PSII) is a light-driven water:plastoquinone oxidoreductase that uses light energy to abstract electrons from H(2)O, generating O(2) and a proton gradient subsequently used for ATP formation. It consists of a core antenna complex that captures photons, and an electron transfer chain that converts photonic excitation into a charge separation. The D1/D2 (PsbA/PsbD) reaction center heterodimer binds P680, the primary electron donor of PSII as well as several subsequent electron acceptors. The polypeptide is Photosystem II protein D1 (Crocosphaera subtropica (strain ATCC 51142 / BH68) (Cyanothece sp. (strain ATCC 51142))).